The primary structure comprises 257 residues: Trans-aconitate 2-methyltransferase (257 aa).

It belongs to the methyltransferase superfamily. Tam family.

The protein resides in the cytoplasm. It carries out the reaction trans-aconitate + S-adenosyl-L-methionine = (E)-3-(methoxycarbonyl)pent-2-enedioate + S-adenosyl-L-homocysteine. Catalyzes the S-adenosylmethionine monomethyl esterification of trans-aconitate. This is Trans-aconitate 2-methyltransferase from Sinorhizobium medicae (strain WSM419) (Ensifer medicae).